A 300-amino-acid chain; its full sequence is GTPase Era (300 aa).

One can recognise an Era-type G domain in the interval 7–175 (YCGFIAIVGR…EKFVRESLKE (169 aa)). The segment at 15–22 (GRPNVGKS) is G1. Residue 15–22 (GRPNVGKS) coordinates GTP. The interval 41–45 (QTTRH) is G2. A G3 region spans residues 62-65 (DTPG). GTP-binding positions include 62 to 66 (DTPGL) and 124 to 127 (NKVD). The tract at residues 124-127 (NKVD) is G4. The tract at residues 154 to 156 (ISA) is G5. The 78-residue stretch at 206-283 (MGEELPYSVT…HLELWVKVKA (78 aa)) folds into the KH type-2 domain.

It belongs to the TRAFAC class TrmE-Era-EngA-EngB-Septin-like GTPase superfamily. Era GTPase family. Monomer.

The protein resides in the cytoplasm. The protein localises to the cell inner membrane. In terms of biological role, an essential GTPase that binds both GDP and GTP, with rapid nucleotide exchange. Plays a role in 16S rRNA processing and 30S ribosomal subunit biogenesis and possibly also in cell cycle regulation and energy metabolism. The polypeptide is GTPase Era (Glaesserella parasuis serovar 5 (strain SH0165) (Haemophilus parasuis)).